Reading from the N-terminus, the 492-residue chain is Zinc finger protein GLIS2 (492 aa).

A disordered region spans residues 49 to 101; the sequence is VITPICSSPPPGFRYRDGDSPPFSSPPIVDLSLSPPSGTDSPSRSSLSPDRAA. A transcription activation region spans residues 69–129; that stretch reads PPFSSPPIVD…SPFQFFLPLG (61 aa). A compositionally biased stretch (low complexity) spans 82 to 97; that stretch reads SPPSGTDSPSRSSLSP. The segment at 138–161 is transcription repression; sequence MFMSPPKENRLSLEFTEQKQLVCQ. A C2H2-type 1 zinc finger spans residues 158–183; sequence LVCQWAKCNRLFELLQELVDHVNDFH. The segment at 192 to 219 adopts a C2H2-type 2; degenerate zinc-finger fold; the sequence is YCCHWEGCARRGRGFNARYKMLIHIRTH. 3 C2H2-type zinc fingers span residues 225–247, 253–277, and 283–307; these read HCCPTCHKSFSRLENLKIHNRSH, YMCPYEGCNKRYSNSSDRFKHTRTH, and YYCKMPGCQKRYTDPSSLRKHIKAH. The segment covering 423–444 has biased composition (basic and acidic residues); sequence VENEKRPKGQRGDSSERTDGSK. The interval 423-450 is disordered; the sequence is VENEKRPKGQRGDSSERTDGSKLRPGSI.

This sequence belongs to the GLI C2H2-type zinc-finger protein family.

It localises to the nucleus speckle. It is found in the cytoplasm. Its function is as follows. Can act either as a transcription repressor or as a transcription activator, depending on the cell context. May be involved in neuron differentiation. In Xenopus laevis (African clawed frog), this protein is Zinc finger protein GLIS2 (glis2).